The sequence spans 450 residues: Phosphoglucosamine mutase (450 aa).

S102 functions as the Phosphoserine intermediate in the catalytic mechanism. S102, D244, D246, and D248 together coordinate Mg(2+). At S102 the chain carries Phosphoserine.

The protein belongs to the phosphohexose mutase family. Mg(2+) serves as cofactor. Post-translationally, activated by phosphorylation.

The catalysed reaction is alpha-D-glucosamine 1-phosphate = D-glucosamine 6-phosphate. Functionally, catalyzes the conversion of glucosamine-6-phosphate to glucosamine-1-phosphate. The polypeptide is Phosphoglucosamine mutase (Nitratidesulfovibrio vulgaris (strain DSM 19637 / Miyazaki F) (Desulfovibrio vulgaris)).